A 282-amino-acid chain; its full sequence is 2,3,4,5-tetrahydropyridine-2,6-dicarboxylate N-succinyltransferase (282 aa).

Substrate-binding residues include R109 and D146.

It belongs to the transferase hexapeptide repeat family. As to quaternary structure, homotrimer.

The protein localises to the cytoplasm. The enzyme catalyses (S)-2,3,4,5-tetrahydrodipicolinate + succinyl-CoA + H2O = (S)-2-succinylamino-6-oxoheptanedioate + CoA. Its pathway is amino-acid biosynthesis; L-lysine biosynthesis via DAP pathway; LL-2,6-diaminopimelate from (S)-tetrahydrodipicolinate (succinylase route): step 1/3. The sequence is that of 2,3,4,5-tetrahydropyridine-2,6-dicarboxylate N-succinyltransferase from Bartonella bacilliformis (strain ATCC 35685 / KC583 / Herrer 020/F12,63).